A 1033-amino-acid polypeptide reads, in one-letter code: SIT4-associating protein SAP190 (1033 aa).

3 disordered regions span residues 32–82, 147–213, and 768–1033; these read DQDD…TTES, PEII…QVET, and FGND…KEAF. The segment covering 158-170 has biased composition (basic and acidic residues); that stretch reads ILIERDRKDKKED. Residues 171–182 are compositionally biased toward acidic residues; the sequence is AEEGGDSEETTN. Residues 183-195 show a composition bias toward basic and acidic residues; the sequence is DSDHDSGDERSVD. Position 774 is a phosphoserine (Ser-774). Composition is skewed to acidic residues over residues 784 to 793 and 825 to 838; these read SEDIIGDTEG and ENEENEEDYAEYSD. Ser-857, Ser-862, and Ser-892 each carry phosphoserine. The span at 858-879 shows a compositional bias: basic and acidic residues; the sequence is DDGKSKSAESEFTDKISEHRDG. Positions 909–924 are enriched in polar residues; it reads SRSQPSDPKLQDQNIF. The span at 932 to 944 shows a compositional bias: acidic residues; the sequence is GVGDDDDYMDPND. Phosphothreonine is present on Thr-990. Ser-991 bears the Phosphoserine mark. Residues 1000–1018 are compositionally biased toward acidic residues; that stretch reads ISSDEEDSEDEDEENDMGN.

The protein belongs to the SAPS family. As to quaternary structure, associates with the SIT4 protein phosphatase catalytic subunit in a cell-cycle-dependent manner. Hyperphosphorylated in the absence of SIT4.

The protein resides in the cytoplasm. In terms of biological role, positive regulator of protein phosphatase SIT4. Involved in the general amino acid control (GAAC) response regulated by TOR. Involved in the dephosphorylation of the elongator complex subunit IKI3. The chain is SIT4-associating protein SAP190 (SAP190) from Saccharomyces cerevisiae (strain ATCC 204508 / S288c) (Baker's yeast).